We begin with the raw amino-acid sequence, 428 residues long: Enolase (428 aa).

Residue glutamine 163 coordinates (2R)-2-phosphoglycerate. Residue glutamate 205 is the Proton donor of the active site. Residues aspartate 242, glutamate 286, and aspartate 313 each contribute to the Mg(2+) site. Residues lysine 338, arginine 367, serine 368, and lysine 389 each contribute to the (2R)-2-phosphoglycerate site. Catalysis depends on lysine 338, which acts as the Proton acceptor.

Belongs to the enolase family. Requires Mg(2+) as cofactor.

Its subcellular location is the cytoplasm. The protein resides in the secreted. It is found in the cell surface. The enzyme catalyses (2R)-2-phosphoglycerate = phosphoenolpyruvate + H2O. The protein operates within carbohydrate degradation; glycolysis; pyruvate from D-glyceraldehyde 3-phosphate: step 4/5. Its function is as follows. Catalyzes the reversible conversion of 2-phosphoglycerate (2-PG) into phosphoenolpyruvate (PEP). It is essential for the degradation of carbohydrates via glycolysis. In Lactobacillus helveticus (strain DPC 4571), this protein is Enolase.